Here is a 191-residue protein sequence, read N- to C-terminus: MFNEREALRLRLEQLNEAEVKVIREYQIERDKIYAKLRELDRNGSPSEIKKDFRSEKKPDSLPVLAELAAQEIRSYQPQSQQQSVQPQLQSISSLPAGIPDGTTRRRRGTARPGSKAAKLREAAIKTLKRHNAAIKSSELQKEIEKESGLEIPNMTTFMQSLIKMYPEVKKPYRGQYILEGEIESAESANE.

Residues 2–43 (FNEREALRLRLEQLNEAEVKVIREYQIERDKIYAKLRELDRN) adopt a coiled-coil conformation. Over residues 75 to 96 (SYQPQSQQQSVQPQLQSISSLP) the composition is skewed to low complexity. The interval 75–116 (SYQPQSQQQSVQPQLQSISSLPAGIPDGTTRRRRGTARPGSK) is disordered. The segment at 95-191 (LPAGIPDGTT…EIESAESANE (97 aa)) is DNA-binding.

It localises to the cytoplasm. The protein resides in the nucleoid. In terms of biological role, repressor of comK, the master regulator of competence development. Overexpression seems to be lethal. Represses at least 20 genes that specify membrane-localized and secreted proteins, including some that encode products with antibiotic activity. Binds to many AT-rich sites in the chromosome, many of which are known or thought to derive from horizontal gene transfer; helps keep mobile element ICEBs1 quiescent in the genome. Binds to its own promoter and is thus probably autoregulatory. The chain is Repressor Rok from Bacillus subtilis (strain 168).